We begin with the raw amino-acid sequence, 120 residues long: NAD(P)H-quinone oxidoreductase subunit 3, chloroplastic (120 aa).

3 consecutive transmembrane segments (helical) span residues 9–29 (IFWAFLIISSAIPFLAFLISG), 64–84 (MFALVFVVFDVETVFLYPWAM), and 88–108 (VLGVSAFIEAFIFVLILILGL).

It belongs to the complex I subunit 3 family. NDH is composed of at least 16 different subunits, 5 of which are encoded in the nucleus.

The protein localises to the plastid. The protein resides in the chloroplast thylakoid membrane. It carries out the reaction a plastoquinone + NADH + (n+1) H(+)(in) = a plastoquinol + NAD(+) + n H(+)(out). The enzyme catalyses a plastoquinone + NADPH + (n+1) H(+)(in) = a plastoquinol + NADP(+) + n H(+)(out). Functionally, NDH shuttles electrons from NAD(P)H:plastoquinone, via FMN and iron-sulfur (Fe-S) centers, to quinones in the photosynthetic chain and possibly in a chloroplast respiratory chain. The immediate electron acceptor for the enzyme in this species is believed to be plastoquinone. Couples the redox reaction to proton translocation, and thus conserves the redox energy in a proton gradient. The sequence is that of NAD(P)H-quinone oxidoreductase subunit 3, chloroplastic from Aethionema cordifolium (Lebanon stonecress).